The primary structure comprises 125 residues: DCPPDWSSYEGHCYRFFKEWMHWDDAEEFCTEQQTGAHLVSFQSKEEADFVRSLTSEMLKGDVVWIGLSDVWNKCRFEWTDGMEFDYDDYYLIAEYECVASKPTNNKWWIIPCTRFKNFVCEFQA.

3 disulfides stabilise this stretch: Cys-2-Cys-13, Cys-30-Cys-121, and Cys-98-Cys-113. The C-type lectin domain maps to 9-122 (YEGHCYRFFK…CTRFKNFVCE (114 aa)).

The protein belongs to the snaclec family. Heterodimer of subunits alpha and beta; disulfide-linked. Botrocetin and vWF form a soluble complex. As to expression, expressed by the venom gland.

The protein localises to the secreted. Functionally, snaclec that binds to von Willebrand factor (VWF) and induces its interaction with GPIbalpha (GP1BA) (via the vWF A1 domain), resulting in platelet aggregation. The sequence is that of Snaclec botrocetin subunit beta from Bothrops jararaca (Jararaca).